The following is a 255-amino-acid chain: Sulfur carrier protein FdhD (255 aa).

C103 serves as the catalytic Cysteine persulfide intermediate.

This sequence belongs to the FdhD family.

It is found in the cytoplasm. Required for formate dehydrogenase (FDH) activity. Acts as a sulfur carrier protein that transfers sulfur from IscS to the molybdenum cofactor prior to its insertion into FDH. The chain is Sulfur carrier protein FdhD from Sulfurisphaera tokodaii (strain DSM 16993 / JCM 10545 / NBRC 100140 / 7) (Sulfolobus tokodaii).